We begin with the raw amino-acid sequence, 146 residues long: Keratin-associated protein 12-2 (146 aa).

23 repeat units span residues 10–14 (CQPAC), 15–19 (CAPSP), 20–24 (CQPAC), 25–29 (CVPSS), 34–38 (CCVPV), 40–44 (CQSSV), 45–49 (CVPVS), 55–59 (CLPVS), 60–64 (CQSSV), 65–69 (CVPMS), 70–74 (FKSAV), 75–79 (CVPVS), 80–84 (CQSSV), 85–89 (CVPVS), 90–94 (CRPIV), 95–99 (CAAPS), 100–104 (CQSSL), 105–109 (CVPVS), 110–114 (CRPVV), 120–124 (CQSSG), 125–129 (CCQPS), 130–134 (CTSVL), and 135–139 (CRPIS). The segment at 10-139 (CQPACCAPSP…CTSVLCRPIS (130 aa)) is 23 X 5 AA approximate repeats.

It belongs to the KRTAP type 12 family. Interacts with hair keratins. As to expression, restricted to a narrow region of the hair fiber cuticle, lying approximately 20 cell layers above the apex of the dermal papilla of the hair root; not detected in any other tissues.

Functionally, in the hair cortex, hair keratin intermediate filaments are embedded in an interfilamentous matrix, consisting of hair keratin-associated proteins (KRTAP), which are essential for the formation of a rigid and resistant hair shaft through their extensive disulfide bond cross-linking with abundant cysteine residues of hair keratins. The matrix proteins include the high-sulfur and high-glycine-tyrosine keratins. The chain is Keratin-associated protein 12-2 (KRTAP12-2) from Homo sapiens (Human).